We begin with the raw amino-acid sequence, 352 residues long: Thiamine-monophosphate kinase (352 aa).

Asp-58, Thr-73, and Asp-75 together coordinate Mg(2+). His-82 contributes to the substrate binding site. Asp-103 and Asp-151 together coordinate Mg(2+). Residues Gly-150–Asp-151 and Arg-177 each bind ATP. Residue Asp-239 coordinates Mg(2+). ATP is bound at residue Ser-241. Asp-242 is a Mg(2+) binding site. Substrate contacts are provided by Asp-294 and Trp-349.

It belongs to the thiamine-monophosphate kinase family.

The catalysed reaction is thiamine phosphate + ATP = thiamine diphosphate + ADP. Its pathway is cofactor biosynthesis; thiamine diphosphate biosynthesis; thiamine diphosphate from thiamine phosphate: step 1/1. Functionally, catalyzes the ATP-dependent phosphorylation of thiamine-monophosphate (TMP) to form thiamine-pyrophosphate (TPP), the active form of vitamin B1. In Caulobacter vibrioides (strain ATCC 19089 / CIP 103742 / CB 15) (Caulobacter crescentus), this protein is Thiamine-monophosphate kinase.